The primary structure comprises 544 residues: Prolyl 4-hydroxylase subunit alpha-3 (544 aa).

An N-terminal signal peptide occupies residues M1–G19. A coiled-coil region spans residues L107–E131. Residues E227 to N260 form a TPR repeat. A glycan (N-linked (GlcNAc...) asparagine) is linked at N248. The 108-residue stretch at Y422–E529 folds into the Fe2OG dioxygenase domain. The Fe cation site is built by H440 and D442. N-linked (GlcNAc...) asparagine glycosylation occurs at N482. H510 is a binding site for Fe cation. Position 520 (K520) interacts with 2-oxoglutarate.

This sequence belongs to the P4HA family. In terms of assembly, heterotetramer of two alpha-3 chains and two beta chains (the beta chain is the multi-functional PDI). Requires Fe(2+) as cofactor. It depends on L-ascorbate as a cofactor. Post-translationally, N-glycosylation plays no role in the catalytic activity.

The protein resides in the endoplasmic reticulum lumen. The enzyme catalyses L-prolyl-[collagen] + 2-oxoglutarate + O2 = trans-4-hydroxy-L-prolyl-[collagen] + succinate + CO2. Functionally, catalyzes the post-translational formation of 4-hydroxyproline in -Xaa-Pro-Gly- sequences in collagens and other proteins. In Bos taurus (Bovine), this protein is Prolyl 4-hydroxylase subunit alpha-3 (P4HA3).